A 596-amino-acid polypeptide reads, in one-letter code: Choline dehydrogenase, mitochondrial (596 aa).

A mitochondrion-targeting transit peptide spans 1–34 (MWQVLRGWRKGWQSPRGALAWAVQGQPCPPCSRA). Residue 44–73 (TFVVVGAGSAGCVLASRLTEDPNHRVLLLE) coordinates FAD. Position 438 is an N6-succinyllysine (Lys-438). N6-acetyllysine; alternate is present on residues Lys-486 and Lys-498. N6-succinyllysine; alternate is present on residues Lys-486 and Lys-498. Catalysis depends on His-513, which acts as the Proton acceptor. Lys-582 bears the N6-acetyllysine mark.

The protein belongs to the GMC oxidoreductase family. Requires FAD as cofactor. Acetylation of Lys-498 is observed in liver mitochondria from fasted mice but not from fed mice.

It localises to the mitochondrion inner membrane. It carries out the reaction choline + A = betaine aldehyde + AH2. It functions in the pathway amine and polyamine biosynthesis; betaine biosynthesis via choline pathway; betaine aldehyde from choline (cytochrome c reductase route): step 1/1. The chain is Choline dehydrogenase, mitochondrial (Chdh) from Mus musculus (Mouse).